The chain runs to 827 residues: Xanthomonalisin (827 aa).

The N-terminal stretch at 1-23 is a signal peptide; that stretch reads MKIEKTALTVAIALAMSSLSAHA. The propeptide at 24–237 is removed in mature form; that stretch reads EDAWVSTHTQ…GPNVGTQAAA (214 aa). The 385-residue stretch at 241 to 625 folds into the Peptidase S53 domain; that stretch reads AHHPQDFAAI…GKLNTYAQAN (385 aa). Residues E312, D316, and S544 each act as charge relay system in the active site. Ca(2+) is bound by residues D585, V586, A601, G603, and D605. One can recognise a PKD domain in the interval 635-722; the sequence is TNAPPVANFS…VTVSSSGGTG (88 aa). Residues 636–827 constitute a propeptide, removed in mature form; it reads NAPPVANFSV…GVSLKATWTN (192 aa).

Requires Ca(2+) as cofactor. In terms of processing, autocatalytically processed.

The protein resides in the secreted. It catalyses the reaction Cleavage of casein.. Its activity is regulated as follows. Inhibited by 1,2-epoxy-3-(p-nitrophenoxy)propane (EPNP), but not by pepstatin, pepstatin Ac (S-PI) and diazoacetyl-DL-norleucine methyl ester (DAN). Not inhibited by metal ions. Its function is as follows. Pepstatin-insensitive serine-carboxyl proteinase. Shows activity on acid-denatured hemoglobin and on casein. This chain is Xanthomonalisin, found in Xanthomonas sp. (strain T-22).